Reading from the N-terminus, the 320-residue chain is Heterogeneous nuclear ribonucleoprotein A1 (320 aa).

Methionine 1 bears the N-acetylmethionine mark. An N-acetylserine; in Heterogeneous nuclear ribonucleoprotein A1, N-terminally processed modification is found at serine 2. Position 2 is a phosphoserine (serine 2). Lysine 3 carries the N6-acetyllysine; alternate modification. A Glycyl lysine isopeptide (Lys-Gly) (interchain with G-Cter in SUMO2); alternate cross-link involves residue lysine 3. Phosphoserine is present on residues serine 4 and serine 6. A globular A domain region spans residues 4–94 (SESPKEPEQL…EPKRAVSRED (91 aa)). Residue lysine 8 forms a Glycyl lysine isopeptide (Lys-Gly) (interchain with G-Cter in SUMO2) linkage. RRM domains follow at residues 14-97 (RKLF…DSQR) and 105-184 (KKIF…LCKQ). The residue at position 22 (serine 22) is a Phosphoserine. A Glycyl lysine isopeptide (Lys-Gly) (interchain with G-Cter in SUMO2) cross-link involves residue lysine 78. Residues 95–185 (SQRPGAHLTV…EVRKALCKQE (91 aa)) are globular B domain. A Glycyl lysine isopeptide (Lys-Gly) (interchain with G-Cter in SUMO) cross-link involves residue lysine 113. Residues lysine 179 and lysine 183 each participate in a glycyl lysine isopeptide (Lys-Gly) (interchain with G-Cter in SUMO2) cross-link. Residues 188–216 (SASSSQRGRSGSGNFGGGRGGGFGGNDNF) form a disordered region. Serine 192 is modified (phosphoserine; by MKNK2). Arginine 194 bears the Asymmetric dimethylarginine; alternate mark. Arginine 194 bears the Dimethylated arginine; alternate mark. An Omega-N-methylarginine; alternate modification is found at arginine 194. The span at 197 to 216 (SGSGNFGGGRGGGFGGNDNF) shows a compositional bias: gly residues. Serine 199 carries the phosphoserine modification. 4 positions are modified to asymmetric dimethylarginine; alternate: arginine 206, arginine 218, arginine 225, and arginine 232. The residue at position 206 (arginine 206) is a Dimethylated arginine; alternate. An omega-N-methylarginine; alternate mark is found at arginine 206, arginine 218, arginine 225, and arginine 232. The RNA-binding RGG-box stretch occupies residues 218–240 (RGGNFSGRGGFGGSRGGGGYGGS). At arginine 225 the chain carries Dimethylated arginine; alternate. Positions 268 to 305 (NQSSNFGPMKGGNFGGRSSGPYGGGGQYFAKPRNQGGY) are nuclear targeting sequence. Positions 271–320 (SNFGPMKGGNFGGRSSGPYGGGGQYFAKPRNQGGYGGSSSSSSYGSGRRF) are disordered. Gly residues predominate over residues 276 to 294 (MKGGNFGGRSSGPYGGGGQ). Arginine 284 carries the omega-N-methylarginine modification. Serine 285 carries the post-translational modification Phosphoserine. The residue at position 298 (lysine 298) is an N6-acetyllysine; alternate. A Glycyl lysine isopeptide (Lys-Gly) (interchain with G-Cter in SUMO2); alternate cross-link involves residue lysine 298. An Omega-N-methylarginine modification is found at arginine 300. Over residues 308-320 (SSSSSSYGSGRRF) the composition is skewed to low complexity. Serine 309 bears the Phosphoserine mark. Residues serine 310, serine 311, and serine 312 each carry the phosphoserine; by MKNK2 modification. Serine 313 and serine 316 each carry phosphoserine. The residue at position 318 (arginine 318) is an Omega-N-methylarginine.

In terms of assembly, identified in the spliceosome C complex. Identified in a IGF2BP1-dependent mRNP granule complex containing untranslated mRNAs. Interacts with SEPT6. Interacts with C9orf72. Interacts with KHDRBS1. Interacts with UBQLN2. Interacts with PPIA/CYPA. In terms of processing, sumoylated.

The protein localises to the nucleus. It localises to the cytoplasm. Involved in the packaging of pre-mRNA into hnRNP particles, transport of poly(A) mRNA from the nucleus to the cytoplasm and modulation of splice site selection. Plays a role in the splicing of pyruvate kinase PKM by binding repressively to sequences flanking PKM exon 9, inhibiting exon 9 inclusion and resulting in exon 10 inclusion and production of the PKM M2 isoform. Binds to the IRES and thereby inhibits the translation of the apoptosis protease activating factor APAF1. May bind to specific miRNA hairpins. The polypeptide is Heterogeneous nuclear ribonucleoprotein A1 (Hnrnpa1) (Rattus norvegicus (Rat)).